The primary structure comprises 239 residues: Phosphoribosylaminoimidazole-succinocarboxamide synthase (239 aa).

Belongs to the SAICAR synthetase family.

The catalysed reaction is 5-amino-1-(5-phospho-D-ribosyl)imidazole-4-carboxylate + L-aspartate + ATP = (2S)-2-[5-amino-1-(5-phospho-beta-D-ribosyl)imidazole-4-carboxamido]succinate + ADP + phosphate + 2 H(+). Its pathway is purine metabolism; IMP biosynthesis via de novo pathway; 5-amino-1-(5-phospho-D-ribosyl)imidazole-4-carboxamide from 5-amino-1-(5-phospho-D-ribosyl)imidazole-4-carboxylate: step 1/2. This Bacillus mycoides (strain KBAB4) (Bacillus weihenstephanensis) protein is Phosphoribosylaminoimidazole-succinocarboxamide synthase.